The primary structure comprises 359 residues: E2F transcription factor-like E2FD (359 aa).

DNA-binding regions lie at residues 13 to 78 and 138 to 217; these read RKDK…SWKG and RKER…RWLG. Disordered regions lie at residues 255–274 and 288–313; these read RNKS…QNTS and DVKN…NNIR. Residues 293–309 show a composition bias toward polar residues; sequence ASGSSTPAGTSESNDMG.

The protein belongs to the E2F/DP family. In terms of assembly, monomer. No interactions with DPA or E2FA. As to expression, preferentially expressed in proliferating tissues. Highly expressed in young stalk and young flowers. Lower expression in young leaves and mature flowers. Detected in cotyledonary vascular tissues, the shoot apical meristem, the base of trichomes, the fully developed stomata, the central root cylinder and in the columella of lateral roots but not in the primary root tips or in the leaf epidermal cells.

The protein localises to the nucleus. Functionally, inhibitor of E2F-dependent regulation of gene expression. Binds specifically the E2 recognition site as a monomer without interacting with DP proteins. May be up-regulating E2FA and down-regulating repressors of cell cycle progression. Promotes cell proliferation and represses cell elongation. Regulated by proteolysis via a ubiquitin-proteasome pathway. The chain is E2F transcription factor-like E2FD (E2FD) from Arabidopsis thaliana (Mouse-ear cress).